A 469-amino-acid polypeptide reads, in one-letter code: UDP-N-acetylmuramoylalanine--D-glutamate ligase (469 aa).

Residue 121–127 participates in ATP binding; that stretch reads GTNGKST.

The protein belongs to the MurCDEF family.

The protein localises to the cytoplasm. The enzyme catalyses UDP-N-acetyl-alpha-D-muramoyl-L-alanine + D-glutamate + ATP = UDP-N-acetyl-alpha-D-muramoyl-L-alanyl-D-glutamate + ADP + phosphate + H(+). Its pathway is cell wall biogenesis; peptidoglycan biosynthesis. Cell wall formation. Catalyzes the addition of glutamate to the nucleotide precursor UDP-N-acetylmuramoyl-L-alanine (UMA). The chain is UDP-N-acetylmuramoylalanine--D-glutamate ligase from Agrobacterium fabrum (strain C58 / ATCC 33970) (Agrobacterium tumefaciens (strain C58)).